Reading from the N-terminus, the 450-residue chain is Phosphoglucosamine mutase (450 aa).

Serine 102 acts as the Phosphoserine intermediate in catalysis. Residues serine 102, aspartate 243, aspartate 245, and aspartate 247 each contribute to the Mg(2+) site. A Phosphoserine modification is found at serine 102.

Belongs to the phosphohexose mutase family. The cofactor is Mg(2+). In terms of processing, activated by phosphorylation.

The enzyme catalyses alpha-D-glucosamine 1-phosphate = D-glucosamine 6-phosphate. In terms of biological role, catalyzes the conversion of glucosamine-6-phosphate to glucosamine-1-phosphate. The sequence is that of Phosphoglucosamine mutase from Rhizobium johnstonii (strain DSM 114642 / LMG 32736 / 3841) (Rhizobium leguminosarum bv. viciae).